Here is a 343-residue protein sequence, read N- to C-terminus: NAC domain-containing protein 4 (343 aa).

The region spanning 12-168 is the NAC domain; sequence LPPGFRFHPT…EWVLCRVFKK (157 aa). A DNA-binding region spans residues 109–174; that stretch reads VGMKKTLVFY…VFKKSLVEVG (66 aa). Residues 304–333 are disordered; it reads GGERERLSASQDTGLTSDVNPEISSSSGQK. The span at 311–332 shows a compositional bias: polar residues; sequence SASQDTGLTSDVNPEISSSSGQ.

In terms of tissue distribution, expressed in roots, tiller buds, stems, leaves, lamina joints and the young husks. Expressed in embryos, coleoptiles, radicles, leaf pulvinus, ligules, panicles, palea and lemma, anthers, and the internode of the peduncles. Expressed in young leaves, root meristems, florescence meristems and young spikelets.

Its subcellular location is the nucleus. Functionally, transcription factor involved in the regulation of tiller bud outgrowth, but does not seem to regulate tiller bud initiation. Possesses transactivation activity in yeast. Involved in the regulation of plant architecture and grain yield. Acts as a negative regulator of plant height and flowering time. Regulates directly key genes of the gibberellin (GA) pathway by binding to their promoters. Positively regulates leaf senescence in an age-dependent manner. Activates directly the expression of the chlorophyll degradation genes SGR and NYC3. Positively regulates the level of abscisic acid (ABA) by directly up-regulating the expression of the ABA biosynthetic genes NCED3 and ZEP, and down-regulating the ABA catabolic gene CYP707A5/ABA8OX1. Promotes salt-induced cell death accompanied by the loss of plasma membrane integrity, nuclear DNA fragmentation, and changes of caspase-like activity. Targets genes that encoded a reactive oxygen species (ROS) scavenger COX11 and a caspase-like protease AP37. Activates the potassium efflux channels GORK and SKOR. Acts as a positive regulator of drought and salt tolerance through ABA-mediated pathways. Acts as a negative regulator of root growth. Functions as an upstream integrator of auxin and cytokinin signals that affect CROWN ROOTLESS (CRL) and cyclin-dependent protein kinase (CDK) genes to regulate cell division during root development. Binds directly to the promoters of the auxin inactivation-related genes GH3.6 and GH3.8, the auxin signaling-related gene ARF25, and the cytokinin oxidase gene CKX4. Activates directly the expressions of the 1-aminocyclopropane-1-carboxylate oxidase genes ACO1 and ACO3, enhancing ethylene synthesis, and then retarding seedling establishment. The polypeptide is NAC domain-containing protein 4 (Oryza sativa subsp. japonica (Rice)).